A 226-amino-acid polypeptide reads, in one-letter code: N-(5'-phosphoribosyl)anthranilate isomerase 2 (226 aa).

It belongs to the TrpF family.

It catalyses the reaction N-(5-phospho-beta-D-ribosyl)anthranilate = 1-(2-carboxyphenylamino)-1-deoxy-D-ribulose 5-phosphate. Its pathway is amino-acid biosynthesis; L-tryptophan biosynthesis; L-tryptophan from chorismate: step 3/5. This Methanosarcina mazei (strain ATCC BAA-159 / DSM 3647 / Goe1 / Go1 / JCM 11833 / OCM 88) (Methanosarcina frisia) protein is N-(5'-phosphoribosyl)anthranilate isomerase 2 (trpF2).